The chain runs to 137 residues: Fluoride-specific ion channel FluC 1 (137 aa).

4 helical membrane-spanning segments follow: residues 3–23 (PLVV…RLVL), 42–62 (INVT…GHGL), 69–89 (ILGT…YEAV), and 107–127 (MMFL…LAVA). Positions 76 and 79 each coordinate Na(+).

Belongs to the fluoride channel Fluc/FEX (TC 1.A.43) family.

The protein localises to the cell membrane. The catalysed reaction is fluoride(in) = fluoride(out). With respect to regulation, na(+) is not transported, but it plays an essential structural role and its presence is essential for fluoride channel function. Fluoride-specific ion channel. Important for reducing fluoride concentration in the cell, thus reducing its toxicity. The sequence is that of Fluoride-specific ion channel FluC 1 from Leifsonia xyli subsp. xyli (strain CTCB07).